A 951-amino-acid chain; its full sequence is Autophagy-related protein 9 (951 aa).

The disordered stretch occupies residues 1–165 (MMTSNILSRF…APGPSSRADR (165 aa)). Topologically, residues 1-239 (MMTSNILSRF…NGIWSILLNR (239 aa)) are cytoplasmic. Over residues 16-33 (SPSVYETLRQQDAESNPS) the composition is skewed to polar residues. Basic and acidic residues predominate over residues 35-54 (VEERAGLEFEDDRRTQFSDR). Positions 79-94 (FLTQRSPQRTSGTATA) are enriched in polar residues. Positions 97 to 108 (GGRRRKHSRPRW) are enriched in basic residues. A helical membrane pass occupies residues 240–260 (GLSLLTFAFVVGFSTFLTNCI). Residues 261-288 (DYRNFRGSRKMDDILIQQCTKKMSMSST) are Lumenal-facing. The chain crosses the membrane as a helical span at residues 289 to 309 (FLLWLLTVFWIGKAFQYLMDI). Topologically, residues 310 to 455 (RRLKHMHDFY…KALSEGLRRR (146 aa)) are cytoplasmic. The stretch at 456 to 476 (FIFAGIMNIFVAPFIVVYFLM) is an intramembrane region. Residues 477–542 (HYFFRYFNEY…QFPKDKTVQV (66 aa)) are Cytoplasmic-facing. Residues 543 to 563 (AGFVAFVSGALASVLALVSII) traverse the membrane as a helical segment. At 564–577 (DPELFLGFEITHDR) the chain is on the lumenal side. Residues 578-598 (TVLFYLGVFGSVWAFARGLVP) form a helical membrane-spanning segment. At 599–644 (EETNVFDPEFALLEVIDFTHYFPNHWKGRLHSDEVRKEFAVLYQMK) the chain is on the cytoplasmic side. Residues 645–665 (IVIFLEEILSMIFTPFILWFS) lie within the membrane without spanning it. Residues 666–951 (LPKCSDRLID…DNRGRTTVGI (286 aa)) are Cytoplasmic-facing. The segment at 848-897 (SRPVRPITDPIEDDNESPSAEIRRGAVKKSPHTTTGSSGGAIGTSDSNLG) is disordered.

The protein belongs to the ATG9 family. In terms of assembly, homotrimer; forms a homotrimer with a central pore that forms a path between the two membrane leaflets. Post-translationally, phosphorylated by atg1. Atg1 phosphorylation is required for preautophagosome elongation.

The protein localises to the preautophagosomal structure membrane. It localises to the cytoplasmic vesicle membrane. It is found in the golgi apparatus membrane. Its subcellular location is the endoplasmic reticulum membrane. It carries out the reaction a 1,2-diacyl-sn-glycero-3-phosphocholine(in) = a 1,2-diacyl-sn-glycero-3-phosphocholine(out). It catalyses the reaction a 1,2-diacyl-sn-glycero-3-phospho-L-serine(in) = a 1,2-diacyl-sn-glycero-3-phospho-L-serine(out). The enzyme catalyses a 1,2-diacyl-sn-glycero-3-phosphoethanolamine(in) = a 1,2-diacyl-sn-glycero-3-phosphoethanolamine(out). The catalysed reaction is a 1,2-diacyl-sn-glycero-3-phospho-(1D-myo-inositol-3-phosphate)(in) = a 1,2-diacyl-sn-glycero-3-phospho-(1D-myo-inositol-3-phosphate)(out). Functionally, phospholipid scramblase involved in autophagy and cytoplasm to vacuole transport (Cvt) vesicle formation. Cycles between the preautophagosomal structure/phagophore assembly site (PAS) and the cytoplasmic vesicle pool and supplies membrane for the growing autophagosome. Lipid scramblase activity plays a key role in preautophagosomal structure/phagophore assembly by distributing the phospholipids that arrive through atg2 from the cytoplasmic to the luminal leaflet of the bilayer, thereby driving autophagosomal membrane expansion. Required for mitophagy. Also involved in endoplasmic reticulum-specific autophagic process and is essential for the survival of cells subjected to severe ER stress. Different machineries are required for anterograde trafficking to the PAS during either the Cvt pathway or bulk autophagy and for retrograde trafficking. The protein is Autophagy-related protein 9 (atg9) of Aspergillus oryzae (strain ATCC 42149 / RIB 40) (Yellow koji mold).